A 145-amino-acid polypeptide reads, in one-letter code: Large ribosomal subunit protein uL16 (145 aa).

This sequence belongs to the universal ribosomal protein uL16 family. Part of the 50S ribosomal subunit.

Binds 23S rRNA and is also seen to make contacts with the A and possibly P site tRNAs. This Herpetosiphon aurantiacus (strain ATCC 23779 / DSM 785 / 114-95) protein is Large ribosomal subunit protein uL16.